Reading from the N-terminus, the 153-residue chain is Ribosome maturation factor RimP (153 aa).

The protein belongs to the RimP family.

The protein localises to the cytoplasm. Functionally, required for maturation of 30S ribosomal subunits. The sequence is that of Ribosome maturation factor RimP from Solibacter usitatus (strain Ellin6076).